Here is a 238-residue protein sequence, read N- to C-terminus: uncharacterized protein (238 aa).

The chain crosses the membrane as a helical span at residues 10 to 33 (TLLALMISLSLSSLLLLSISHFYV).

It localises to the membrane. This is an uncharacterized protein from Haemophilus influenzae (strain ATCC 51907 / DSM 11121 / KW20 / Rd).